A 77-amino-acid chain; its full sequence is Large ribosomal subunit protein uL29 (77 aa).

The protein belongs to the universal ribosomal protein uL29 family.

This chain is Large ribosomal subunit protein uL29, found in Mycolicibacterium gilvum (strain PYR-GCK) (Mycobacterium gilvum (strain PYR-GCK)).